A 240-amino-acid polypeptide reads, in one-letter code: Serine protease SplB (240 aa).

An N-terminal signal peptide occupies residues 1–36 (MNKNVVIKSLATLTILTSVTGIGTTLVEEVQQTAKA). Catalysis depends on charge relay system residues His-75, Asp-113, and Ser-193.

It belongs to the peptidase S1B family.

The protein localises to the secreted. Its function is as follows. Serine protease that cleaves specifically after the sequence Trp-Glu-Leu-Gln. This Staphylococcus aureus (strain Mu3 / ATCC 700698) protein is Serine protease SplB (splB).